The following is a 436-amino-acid chain: Prenyltransferase nscD (436 aa).

Belongs to the tryptophan dimethylallyltransferase family.

It functions in the pathway secondary metabolite biosynthesis. Prenyltransferase; part of the gene cluster that mediates the biosynthesis of neosartoricin B, a prenylated anthracenone that probably exhibits T-cell antiproliferative activity, suggestive of a physiological role as an immunosuppressive agent. The non-reducing polyketide synthase nscA probably synthesizes and cyclizes the decaketide backbone. The hydrolase nscB then mediates the product release through hydrolysis followed by spontaneous decarboxylation. The prenyltransferase nscD catalyzes the addition of the dimethylallyl group to the aromatic C5. The FAD-dependent monooxygenase nscC is then responsible for the stereospecific hydroxylation at C2. Neosartoricin B can be converted into two additional compounds neosartoricins C and D. Neosartoricin C is a spirocyclic compound that is cyclized through the attack of C3 hydroxyl on C14, followed by dehydration. On the other hand, neosartoricin D is a further cyclized compound in which attack of C2 on C14 in neosartoricin C results in the formation of the acetal-containing dioxabicyclo-octanone ring. Both of these compounds are novel and possibly represent related metabolites of the gene cluster. The polypeptide is Prenyltransferase nscD (Arthroderma gypseum (strain ATCC MYA-4604 / CBS 118893) (Microsporum gypseum)).